The chain runs to 473 residues: Spliceosome-associated protein CWC27 homolog (473 aa).

S2 is modified (N-acetylserine). The PPIase cyclophilin-type domain occupies 11–166 (TNGKVLLKTT…NPHKIKSCEV (156 aa)). Positions 177–193 (REIKRPKKEKPEEEVKK) are enriched in basic and acidic residues. 2 disordered regions span residues 177–386 (REIK…EDQT) and 399–473 (QAIA…KERR). The stretch at 206-230 (SFGEEAEEEEEEVNRVSQSMKGKSK) forms a coiled coil. The span at 231–241 (SSHDLLKDDPH) shows a compositional bias: basic and acidic residues. The span at 257–266 (GDLDDGGEGE) shows a compositional bias: acidic residues. 3 stretches are compositionally biased toward basic and acidic residues: residues 267 to 287 (SAEH…ERIA), 305 to 348 (EVEK…KRSE), and 360 to 372 (EYRR…EALR). A coiled-coil region spans residues 305-378 (EVEKKSVNRS…EALRKQQSKK (74 aa)). S347 is modified (phosphoserine). Residues 405–419 (PENDIPETEVEDDEG) show a composition bias toward acidic residues. Basic and acidic residues-rich tracts occupy residues 426–438 (QFED…KDAS) and 458–473 (RREE…KERR).

Belongs to the cyclophilin-type PPIase family. As to quaternary structure, part of the activated spliceosome B/catalytic step 1 spliceosome, one of the forms of the spliceosome which has a well-formed active site but still cannot catalyze the branching reaction and is composed at least of 52 proteins, the U2, U5 and U6 snRNAs and the pre-mRNA. Recruited during early steps of activated spliceosome B maturation, it is probably one of the first proteins released from this complex as he matures to the spliceosome C complex. Component of the minor spliceosome, which splices U12-type introns.

It is found in the nucleus. As part of the spliceosome, plays a role in pre-mRNA splicing. Probable inactive PPIase with no peptidyl-prolyl cis-trans isomerase activity. As a component of the minor spliceosome, involved in the splicing of U12-type introns in pre-mRNAs. In Pongo abelii (Sumatran orangutan), this protein is Spliceosome-associated protein CWC27 homolog.